The chain runs to 153 residues: Lipoprotein signal peptidase (153 aa).

3 helical membrane passes run isoleucine 6–valine 26, glutamine 60–histidine 80, and aspartate 85–isoleucine 105. Residues aspartate 115 and aspartate 131 contribute to the active site. A helical transmembrane segment spans residues phenylalanine 124–alanine 144.

It belongs to the peptidase A8 family.

It localises to the cell membrane. It carries out the reaction Release of signal peptides from bacterial membrane prolipoproteins. Hydrolyzes -Xaa-Yaa-Zaa-|-(S,diacylglyceryl)Cys-, in which Xaa is hydrophobic (preferably Leu), and Yaa (Ala or Ser) and Zaa (Gly or Ala) have small, neutral side chains.. It participates in protein modification; lipoprotein biosynthesis (signal peptide cleavage). Its function is as follows. This protein specifically catalyzes the removal of signal peptides from prolipoproteins. This chain is Lipoprotein signal peptidase, found in Streptococcus pneumoniae (strain ATCC BAA-255 / R6).